Reading from the N-terminus, the 187-residue chain is NADH-dependent FMN reductase SfnF (187 aa).

This sequence belongs to the SsuE family.

The enzyme catalyses FMNH2 + NAD(+) = FMN + NADH + 2 H(+). Involved in the dimethyl sulfide degradation pathway. Catalyzes the NADH-dependent reduction of FMN. The sequence is that of NADH-dependent FMN reductase SfnF from Pseudomonas fluorescens (strain Pf0-1).